Reading from the N-terminus, the 234-residue chain is ATP synthase subunit delta, chloroplastic (234 aa).

The transit peptide at 1–47 directs the protein to the chloroplast; the sequence is MASLQQTLFSLQSKLPPSSFQIARSLPLRKTFPIRINNGGNAAGARM. The residue at position 48 (S48) is an N-acetylserine. The N-linked (GlcNAc...) asparagine glycan is linked to N66. T234 carries the phosphothreonine modification.

This sequence belongs to the ATPase delta chain family. As to quaternary structure, F-type ATPases have 2 components, F(1) - the catalytic core - and F(0) - the membrane proton channel. F(1) has five subunits: alpha(3), beta(3), gamma(1), delta(1), epsilon(1). CF(0) has four main subunits: a(1), b(1), b'(1) and c(10-14). The alpha and beta chains form an alternating ring which encloses part of the gamma chain. F(1) is attached to F(0) by a central stalk formed by the gamma and epsilon chains, while a peripheral stalk is formed by the delta, b and b' chains.

Its subcellular location is the plastid. It localises to the chloroplast thylakoid membrane. F(1)F(0) ATP synthase produces ATP from ADP in the presence of a proton or sodium gradient. F-type ATPases consist of two structural domains, F(1) containing the extramembraneous catalytic core and F(0) containing the membrane proton channel, linked together by a central stalk and a peripheral stalk. During catalysis, ATP synthesis in the catalytic domain of F(1) is coupled via a rotary mechanism of the central stalk subunits to proton translocation (Potential). Essential for photosynthesis, probably by facilitating electron transport in both photosystems I and II. Functionally, this protein is part of the stalk that links CF(0) to CF(1). It either transmits conformational changes from CF(0) to CF(1) or is implicated in proton conduction. In Arabidopsis thaliana (Mouse-ear cress), this protein is ATP synthase subunit delta, chloroplastic.